The primary structure comprises 256 residues: UPF0246 protein TERTU_4575 (256 aa).

This sequence belongs to the UPF0246 family.

The sequence is that of UPF0246 protein TERTU_4575 from Teredinibacter turnerae (strain ATCC 39867 / T7901).